The chain runs to 277 residues: MNSLDLHLDYGIVEDILKTFLLNEIRKFGFRSVVLGLSGGIDSAVVCELASRALGSDQVLALMMPYRSSSTDSIVHAQLLVEKLGIRAETCSITAAVDAFFEGVPEEDRLRRGNIMARTRMVYLYDVSARQNSLVVGTSNKTELLLGYGTLFGDMASAVNPVGDLYKTQIRGLARHLGIPEQLITKTPSADLWEGQSDEADLGFSYDEVDHLLFMMLEKRMDKAAIIEQGVSEIFYDRVRKMVVRNQYKRMMPVIAKISSRTPGIDFRYARDWQEVK.

36–43 (GLSGGIDS) is an ATP binding site. Residue aspartate 42 participates in Mg(2+) binding. Position 118 (arginine 118) interacts with deamido-NAD(+). Threonine 138 is an ATP binding site. Position 143 (glutamate 143) interacts with Mg(2+). ATP-binding residues include lysine 167 and serine 189.

Belongs to the NAD synthetase family. In terms of assembly, homodimer.

It carries out the reaction deamido-NAD(+) + NH4(+) + ATP = AMP + diphosphate + NAD(+) + H(+). Its pathway is cofactor biosynthesis; NAD(+) biosynthesis; NAD(+) from deamido-NAD(+) (ammonia route): step 1/1. Catalyzes the ATP-dependent amidation of deamido-NAD to form NAD. Uses ammonia as a nitrogen source. This chain is NH(3)-dependent NAD(+) synthetase, found in Chlorobium phaeobacteroides (strain DSM 266 / SMG 266 / 2430).